Consider the following 250-residue polypeptide: Copper homeostasis protein cutC homolog (250 aa).

Belongs to the CutC family.

In terms of biological role, involved in copper homeostasis. Affects body morphology and length, egg laying and brood size. The protein is Copper homeostasis protein cutC homolog (cutc-1) of Caenorhabditis elegans.